A 264-amino-acid polypeptide reads, in one-letter code: MKQYLDLMKKVLEEGTPKADRTGTGTLSIFGHQMRFNLQDGFPLVTTKRCHLRSIIHELLWFLNGDTNIAYLKENNVSIWDEWADENGDLGPIYGKQWRAWGAADGRKIDQLSNVVNQLKQDPDSRRIIVSAWNVGELDQMALAPCHAFFQFYVADGKLSCQLYQRSCDVFLGLPFNIASYALLVHMMAQQCDLAVGDFVWTGGDTHLYSNHIDQTHLQLSREPRALPKLVIKRKPDSLFDYHFDDFDIEGYDPHPGIKAPIAI.

R21 contributes to the dUMP binding site. H51 is a (6R)-5,10-methylene-5,6,7,8-tetrahydrofolate binding site. A dUMP-binding site is contributed by 126–127 (RR). Residue C146 is the Nucleophile of the active site. DUMP contacts are provided by residues 166–169 (RSCD), N177, and 207–209 (HLY). D169 is a (6R)-5,10-methylene-5,6,7,8-tetrahydrofolate binding site. (6R)-5,10-methylene-5,6,7,8-tetrahydrofolate is bound at residue A263.

It belongs to the thymidylate synthase family. Bacterial-type ThyA subfamily. Homodimer.

It localises to the cytoplasm. The catalysed reaction is dUMP + (6R)-5,10-methylene-5,6,7,8-tetrahydrofolate = 7,8-dihydrofolate + dTMP. It participates in pyrimidine metabolism; dTTP biosynthesis. In terms of biological role, catalyzes the reductive methylation of 2'-deoxyuridine-5'-monophosphate (dUMP) to 2'-deoxythymidine-5'-monophosphate (dTMP) while utilizing 5,10-methylenetetrahydrofolate (mTHF) as the methyl donor and reductant in the reaction, yielding dihydrofolate (DHF) as a by-product. This enzymatic reaction provides an intracellular de novo source of dTMP, an essential precursor for DNA biosynthesis. The protein is Thymidylate synthase of Yersinia pseudotuberculosis serotype O:1b (strain IP 31758).